Reading from the N-terminus, the 203-residue chain is Pyridoxal 5'-phosphate synthase subunit PdxT (203 aa).

Residue 52–54 coordinates L-glutamine; the sequence is GES. Catalysis depends on cysteine 84, which acts as the Nucleophile. Residues arginine 116 and 144 to 145 contribute to the L-glutamine site; that span reads IR. Active-site charge relay system residues include histidine 184 and glutamate 186.

It belongs to the glutaminase PdxT/SNO family. In terms of assembly, in the presence of PdxS, forms a dodecamer of heterodimers. Only shows activity in the heterodimer.

The enzyme catalyses aldehydo-D-ribose 5-phosphate + D-glyceraldehyde 3-phosphate + L-glutamine = pyridoxal 5'-phosphate + L-glutamate + phosphate + 3 H2O + H(+). It catalyses the reaction L-glutamine + H2O = L-glutamate + NH4(+). The protein operates within cofactor biosynthesis; pyridoxal 5'-phosphate biosynthesis. Catalyzes the hydrolysis of glutamine to glutamate and ammonia as part of the biosynthesis of pyridoxal 5'-phosphate. The resulting ammonia molecule is channeled to the active site of PdxS. This Aeropyrum pernix (strain ATCC 700893 / DSM 11879 / JCM 9820 / NBRC 100138 / K1) protein is Pyridoxal 5'-phosphate synthase subunit PdxT.